The chain runs to 168 residues: ATP synthase subunit b (168 aa).

Residues 9-29 (LFNLSTFVFTIINLLVLYYIL) traverse the membrane as a helical segment.

Belongs to the ATPase B chain family. In terms of assembly, F-type ATPases have 2 components, F(1) - the catalytic core - and F(0) - the membrane proton channel. F(1) has five subunits: alpha(3), beta(3), gamma(1), delta(1), epsilon(1). F(0) has three main subunits: a(1), b(2) and c(10-14). The alpha and beta chains form an alternating ring which encloses part of the gamma chain. F(1) is attached to F(0) by a central stalk formed by the gamma and epsilon chains, while a peripheral stalk is formed by the delta and b chains.

The protein localises to the cell membrane. In terms of biological role, f(1)F(0) ATP synthase produces ATP from ADP in the presence of a proton or sodium gradient. F-type ATPases consist of two structural domains, F(1) containing the extramembraneous catalytic core and F(0) containing the membrane proton channel, linked together by a central stalk and a peripheral stalk. During catalysis, ATP synthesis in the catalytic domain of F(1) is coupled via a rotary mechanism of the central stalk subunits to proton translocation. Its function is as follows. Component of the F(0) channel, it forms part of the peripheral stalk, linking F(1) to F(0). This Caldanaerobacter subterraneus subsp. tengcongensis (strain DSM 15242 / JCM 11007 / NBRC 100824 / MB4) (Thermoanaerobacter tengcongensis) protein is ATP synthase subunit b.